Reading from the N-terminus, the 142-residue chain is MVLSAADKTNVKAAWSKVGGNSGAYMGEALYRTFLSFPPTKTYFPHFEFSAGSAQIKGQGQKIADAVSLAVAHMDDLATALSALSDLHAHNLKVDPVNFKFLCHNVLVTLASHLGKDFTPEIHASLDKFLALLSTVLTSKYR.

One can recognise a Globin domain in the interval 2 to 142 (VLSAADKTNV…LSTVLTSKYR (141 aa)). Position 4 is a phosphoserine (Ser4). Lys8 bears the N6-succinyllysine mark. Thr9 carries the post-translational modification Phosphothreonine. Lys12 is subject to N6-succinyllysine. At Lys17 the chain carries N6-acetyllysine; alternate. Residue Lys17 is modified to N6-succinyllysine; alternate. At Tyr25 the chain carries Phosphotyrosine. Residue Ser36 is modified to Phosphoserine. Lys41 bears the N6-succinyllysine mark. Ser50 carries the phosphoserine modification. Gln59 contacts O2. His88 serves as a coordination point for heme b. Thr109 carries the phosphothreonine modification. At Ser125 the chain carries Phosphoserine. Phosphothreonine occurs at positions 135 and 138. Ser139 bears the Phosphoserine mark.

Belongs to the globin family. As to quaternary structure, heterotetramer of two alpha chains and two beta chains. Red blood cells.

Involved in oxygen transport from the lung to the various peripheral tissues. In terms of biological role, hemopressin acts as an antagonist peptide of the cannabinoid receptor CNR1. Hemopressin-binding efficiently blocks cannabinoid receptor CNR1 and subsequent signaling. This chain is Hemoglobin subunit alpha (HBA), found in Monodelphis domestica (Gray short-tailed opossum).